Reading from the N-terminus, the 499-residue chain is Lysine--tRNA ligase (499 aa).

Mg(2+) is bound by residues Glu-408 and Glu-415.

It belongs to the class-II aminoacyl-tRNA synthetase family. Homodimer. The cofactor is Mg(2+).

The protein resides in the cytoplasm. The enzyme catalyses tRNA(Lys) + L-lysine + ATP = L-lysyl-tRNA(Lys) + AMP + diphosphate. This is Lysine--tRNA ligase from Bacillus cereus (strain G9842).